A 401-amino-acid chain; its full sequence is All trans-polyprenyl-diphosphate synthase PDSS2 (401 aa).

Belongs to the FPP/GGPP synthase family. In terms of assembly, heterotetramer composed of 2 PDSS1/DPS1 and 2 PDSS2/DLP1 subunits.

The protein resides in the mitochondrion. The catalysed reaction is 7 isopentenyl diphosphate + (2E,6E)-farnesyl diphosphate = all-trans-decaprenyl diphosphate + 7 diphosphate. It catalyses the reaction 6 isopentenyl diphosphate + (2E,6E)-farnesyl diphosphate = all-trans-nonaprenyl diphosphate + 6 diphosphate. It participates in cofactor biosynthesis; ubiquinone biosynthesis. Functionally, heterotetrameric enzyme that catalyzes the condensation of farnesyl diphosphate (FPP), which acts as a primer, and isopentenyl diphosphate (IPP) to produce prenyl diphosphates of varying chain lengths and participates in the determination of the side chain of ubiquinone. Supplies nona and decaprenyl diphosphate, the precursors for the side chain of the isoprenoid quinones ubiquinone-9 (Q9) and ubiquinone-10 (Q10) respectively. The enzyme adds isopentenyl diphosphate molecules sequentially to farnesyl diphosphate with trans stereochemistry. May play a role during cerebellar development. May regulate mitochondrial respiratory chain function. The sequence is that of All trans-polyprenyl-diphosphate synthase PDSS2 from Mus musculus (Mouse).